Consider the following 285-residue polypeptide: Transcription factor LBX1 (285 aa).

The segment covering methionine 1–leucine 20 has biased composition (basic and acidic residues). The disordered stretch occupies residues methionine 1–phenylalanine 36. A DNA-binding region (homeobox) is located at residues arginine 125–leucine 184. The segment at glutamate 212 to aspartate 285 is disordered. A compositionally biased stretch (gly residues) spans serine 218–glycine 230. Over residues cysteine 272–aspartate 285 the composition is skewed to acidic residues.

Interacts with SKOR1 which acts as a transcriptional corepressor.

Its subcellular location is the nucleus. Functionally, transcription factor required for the development of GABAergic interneurons in the dorsal horn of the spinal cord and migration and further development of hypaxial muscle precursor cells for limb muscles, diaphragm and hypoglossal cord. This Rattus norvegicus (Rat) protein is Transcription factor LBX1.